Reading from the N-terminus, the 90-residue chain is Phosphoribosyl-ATP pyrophosphatase (90 aa).

The protein belongs to the PRA-PH family.

It localises to the cytoplasm. It carries out the reaction 1-(5-phospho-beta-D-ribosyl)-ATP + H2O = 1-(5-phospho-beta-D-ribosyl)-5'-AMP + diphosphate + H(+). It functions in the pathway amino-acid biosynthesis; L-histidine biosynthesis; L-histidine from 5-phospho-alpha-D-ribose 1-diphosphate: step 2/9. This chain is Phosphoribosyl-ATP pyrophosphatase, found in Streptomyces avermitilis (strain ATCC 31267 / DSM 46492 / JCM 5070 / NBRC 14893 / NCIMB 12804 / NRRL 8165 / MA-4680).